The following is a 449-amino-acid chain: Phosphoglucosamine mutase (449 aa).

The active-site Phosphoserine intermediate is serine 103. Mg(2+)-binding residues include serine 103, aspartate 240, aspartate 242, and aspartate 244. Residue serine 103 is modified to Phosphoserine.

This sequence belongs to the phosphohexose mutase family. Requires Mg(2+) as cofactor. In terms of processing, activated by phosphorylation.

The catalysed reaction is alpha-D-glucosamine 1-phosphate = D-glucosamine 6-phosphate. In terms of biological role, catalyzes the conversion of glucosamine-6-phosphate to glucosamine-1-phosphate. This Thermobifida fusca (strain YX) protein is Phosphoglucosamine mutase.